Here is a 90-residue protein sequence, read N- to C-terminus: Barrier-to-autointegration factor-like protein (90 aa).

In terms of assembly, homodimer. Heterodimerizes with BANF1.

It is found in the nucleus. It localises to the cytoplasm. Its function is as follows. May play a role in BANF1 regulation and influence tissue-specific roles of BANF1. This chain is Barrier-to-autointegration factor-like protein (Banf2), found in Mus musculus (Mouse).